The following is a 335-amino-acid chain: tRNA N6-adenosine threonylcarbamoyltransferase (335 aa).

Positions 110 and 114 each coordinate Fe cation. Residues 132-136 (LVSGG), Asp-165, Gly-178, and Asn-271 contribute to the substrate site. Asp-299 is a binding site for Fe cation.

This sequence belongs to the KAE1 / TsaD family. Fe(2+) serves as cofactor.

The protein resides in the cytoplasm. It carries out the reaction L-threonylcarbamoyladenylate + adenosine(37) in tRNA = N(6)-L-threonylcarbamoyladenosine(37) in tRNA + AMP + H(+). In terms of biological role, required for the formation of a threonylcarbamoyl group on adenosine at position 37 (t(6)A37) in tRNAs that read codons beginning with adenine. Is involved in the transfer of the threonylcarbamoyl moiety of threonylcarbamoyl-AMP (TC-AMP) to the N6 group of A37, together with TsaE and TsaB. TsaD likely plays a direct catalytic role in this reaction. The polypeptide is tRNA N6-adenosine threonylcarbamoyltransferase (Campylobacter jejuni subsp. jejuni serotype O:23/36 (strain 81-176)).